A 150-amino-acid chain; its full sequence is Arginine repressor (150 aa).

It belongs to the ArgR family.

It is found in the cytoplasm. It functions in the pathway amino-acid biosynthesis; L-arginine biosynthesis [regulation]. Functionally, regulates arginine biosynthesis genes. The polypeptide is Arginine repressor (Symbiobacterium thermophilum (strain DSM 24528 / JCM 14929 / IAM 14863 / T)).